The sequence spans 1012 residues: ATP-dependent DNA helicase MPH1 (1012 aa).

Residues 94–261 enclose the Helicase ATP-binding domain; that stretch reads IVQKSLYQNT…EVVNNLNISN (168 aa). ATP is bound at residue 107–114; the sequence is IPTGMGKT. The short motif at 209 to 212 is the DEAH box element; it reads DEAH. Positions 430-654 constitute a Helicase C-terminal domain; that stretch reads KLQKIINELS…NFVEYKKSDR (225 aa). The disordered stretch occupies residues 493 to 555; the sequence is DEGFIRKNKP…AQISGMNQKQ (63 aa). Residues 498-510 show a composition bias toward basic residues; sequence RKNKPKGRKKADR. Residues 511-537 are compositionally biased toward basic and acidic residues; the sequence is LKRLEEDKQKQLSKAKQKEQEKVERSS.

This sequence belongs to the DEAD box helicase family. DEAH subfamily. FANCM sub-subfamily. As to quaternary structure, interacts with the MHF histone-fold complex to form the FANCM-MHF complex.

Its subcellular location is the nucleus. The catalysed reaction is ATP + H2O = ADP + phosphate + H(+). In terms of biological role, ATP-dependent DNA helicase involved in DNA damage repair by homologous recombination and in genome maintenance. Capable of unwinding D-loops. Plays a role in limiting crossover recombinants during mitotic DNA double-strand break (DSB) repair. Component of a FANCM-MHF complex which promotes gene conversion at blocked replication forks, probably by reversal of the stalled fork. The chain is ATP-dependent DNA helicase MPH1 from Vanderwaltozyma polyspora (strain ATCC 22028 / DSM 70294 / BCRC 21397 / CBS 2163 / NBRC 10782 / NRRL Y-8283 / UCD 57-17) (Kluyveromyces polysporus).